We begin with the raw amino-acid sequence, 184 residues long: dCTP deaminase (184 aa).

Residues 107–112, 131–133, Q152, Y166, and Q176 each bind dCTP; these read KSTYAR and TLE. The Proton donor/acceptor role is filled by E133.

This sequence belongs to the dCTP deaminase family. As to quaternary structure, homotrimer.

The catalysed reaction is dCTP + H2O + H(+) = dUTP + NH4(+). It functions in the pathway pyrimidine metabolism; dUMP biosynthesis; dUMP from dCTP (dUTP route): step 1/2. Functionally, catalyzes the deamination of dCTP to dUTP. This is dCTP deaminase from Rhodospirillum centenum (strain ATCC 51521 / SW).